Consider the following 282-residue polypeptide: 4-diphosphocytidyl-2-C-methyl-D-erythritol kinase (282 aa).

Lysine 9 is an active-site residue. An ATP-binding site is contributed by 98 to 108 (PMGGGLGGGSS). Aspartate 140 is a catalytic residue.

Belongs to the GHMP kinase family. IspE subfamily. Homodimer.

The enzyme catalyses 4-CDP-2-C-methyl-D-erythritol + ATP = 4-CDP-2-C-methyl-D-erythritol 2-phosphate + ADP + H(+). Its pathway is isoprenoid biosynthesis; isopentenyl diphosphate biosynthesis via DXP pathway; isopentenyl diphosphate from 1-deoxy-D-xylulose 5-phosphate: step 3/6. In terms of biological role, catalyzes the phosphorylation of the position 2 hydroxy group of 4-diphosphocytidyl-2C-methyl-D-erythritol. In Salmonella paratyphi B (strain ATCC BAA-1250 / SPB7), this protein is 4-diphosphocytidyl-2-C-methyl-D-erythritol kinase.